The chain runs to 363 residues: Phosphoserine aminotransferase (363 aa).

Residue arginine 42 coordinates L-glutamate. Pyridoxal 5'-phosphate-binding positions include 76 to 77 (AS), tryptophan 101, threonine 151, aspartate 170, and glutamine 193. Lysine 194 carries the post-translational modification N6-(pyridoxal phosphate)lysine. 234 to 235 (NT) serves as a coordination point for pyridoxal 5'-phosphate.

It belongs to the class-V pyridoxal-phosphate-dependent aminotransferase family. SerC subfamily. Homodimer. It depends on pyridoxal 5'-phosphate as a cofactor.

It localises to the cytoplasm. It catalyses the reaction O-phospho-L-serine + 2-oxoglutarate = 3-phosphooxypyruvate + L-glutamate. It carries out the reaction 4-(phosphooxy)-L-threonine + 2-oxoglutarate = (R)-3-hydroxy-2-oxo-4-phosphooxybutanoate + L-glutamate. It functions in the pathway amino-acid biosynthesis; L-serine biosynthesis; L-serine from 3-phospho-D-glycerate: step 2/3. Its function is as follows. Catalyzes the reversible conversion of 3-phosphohydroxypyruvate to phosphoserine and of 3-hydroxy-2-oxo-4-phosphonooxybutanoate to phosphohydroxythreonine. The polypeptide is Phosphoserine aminotransferase (Listeria monocytogenes serotype 4b (strain F2365)).